Reading from the N-terminus, the 931-residue chain is Isoleucine--tRNA ligase (931 aa).

Polar residues predominate over residues 1–14 (MDYSKTLNLPQTQF). Residues 1–25 (MDYSKTLNLPQTQFPMRGNLPQREP) form a disordered region. A 'HIGH' region motif is present at residues 57 to 67 (PYANGHIHLGH). Position 559 (Glu559) interacts with L-isoleucyl-5'-AMP. The 'KMSKS' region motif lies at 600 to 604 (KMSKS). ATP is bound at residue Lys603. Zn(2+)-binding residues include Cys898, Cys901, Cys918, and Cys921.

It belongs to the class-I aminoacyl-tRNA synthetase family. IleS type 1 subfamily. In terms of assembly, monomer. Zn(2+) serves as cofactor.

It is found in the cytoplasm. The catalysed reaction is tRNA(Ile) + L-isoleucine + ATP = L-isoleucyl-tRNA(Ile) + AMP + diphosphate. Its function is as follows. Catalyzes the attachment of isoleucine to tRNA(Ile). As IleRS can inadvertently accommodate and process structurally similar amino acids such as valine, to avoid such errors it has two additional distinct tRNA(Ile)-dependent editing activities. One activity is designated as 'pretransfer' editing and involves the hydrolysis of activated Val-AMP. The other activity is designated 'posttransfer' editing and involves deacylation of mischarged Val-tRNA(Ile). This is Isoleucine--tRNA ligase from Desulforamulus reducens (strain ATCC BAA-1160 / DSM 100696 / MI-1) (Desulfotomaculum reducens).